Reading from the N-terminus, the 485-residue chain is NADH-quinone oxidoreductase subunit N (485 aa).

14 helical membrane passes run Leu-8–Ile-28, Phe-35–Val-55, Gly-71–Ala-91, Phe-105–Leu-125, Ser-127–Phe-147, Tyr-159–Ala-179, Leu-203–Phe-223, Pro-235–Met-255, Val-271–Gln-291, Leu-297–Gln-317, Val-326–Leu-346, Ala-373–Ile-393, Trp-408–Val-430, and Ile-455–Ile-475.

It belongs to the complex I subunit 2 family. NDH-1 is composed of 13 different subunits. Subunits NuoA, H, J, K, L, M, N constitute the membrane sector of the complex.

The protein localises to the cell inner membrane. The catalysed reaction is a quinone + NADH + 5 H(+)(in) = a quinol + NAD(+) + 4 H(+)(out). NDH-1 shuttles electrons from NADH, via FMN and iron-sulfur (Fe-S) centers, to quinones in the respiratory chain. The immediate electron acceptor for the enzyme in this species is believed to be ubiquinone. Couples the redox reaction to proton translocation (for every two electrons transferred, four hydrogen ions are translocated across the cytoplasmic membrane), and thus conserves the redox energy in a proton gradient. This is NADH-quinone oxidoreductase subunit N from Shigella dysenteriae serotype 1 (strain Sd197).